Consider the following 335-residue polypeptide: Protein-arginine kinase (335 aa).

Residues 21 to 244 form the Phosphagen kinase C-terminal domain; sequence IVMSSRIRLA…NQIIHEEKQI (224 aa). ATP contacts are provided by residues 24–28, His-82, Arg-115, 166–170, and 197–202; these read SSRIR, RASVM, and RGIYGE.

This sequence belongs to the ATP:guanido phosphotransferase family.

It catalyses the reaction L-arginyl-[protein] + ATP = N(omega)-phospho-L-arginyl-[protein] + ADP + H(+). Catalyzes the specific phosphorylation of arginine residues in proteins. This is Protein-arginine kinase from Staphylococcus aureus (strain USA300).